A 147-amino-acid polypeptide reads, in one-letter code: Probable flagellum biosynthesis repressor protein FlbT (147 aa).

The protein belongs to the FlbT family.

Functionally, has a post-transcriptional repressor function in flagellum biogenesis. Associates with the 5'-UTR of fljK mRNA and promotes its degradation. This is Probable flagellum biosynthesis repressor protein FlbT from Mesorhizobium japonicum (strain LMG 29417 / CECT 9101 / MAFF 303099) (Mesorhizobium loti (strain MAFF 303099)).